The primary structure comprises 160 residues: SsrA-binding protein (160 aa).

The disordered stretch occupies residues 132–160 (KEFDKRDTMRERDSNRELQRAVRNKGKEE).

Belongs to the SmpB family.

Its subcellular location is the cytoplasm. In terms of biological role, required for rescue of stalled ribosomes mediated by trans-translation. Binds to transfer-messenger RNA (tmRNA), required for stable association of tmRNA with ribosomes. tmRNA and SmpB together mimic tRNA shape, replacing the anticodon stem-loop with SmpB. tmRNA is encoded by the ssrA gene; the 2 termini fold to resemble tRNA(Ala) and it encodes a 'tag peptide', a short internal open reading frame. During trans-translation Ala-aminoacylated tmRNA acts like a tRNA, entering the A-site of stalled ribosomes, displacing the stalled mRNA. The ribosome then switches to translate the ORF on the tmRNA; the nascent peptide is terminated with the 'tag peptide' encoded by the tmRNA and targeted for degradation. The ribosome is freed to recommence translation, which seems to be the essential function of trans-translation. The protein is SsrA-binding protein of Pseudomonas putida (strain ATCC 47054 / DSM 6125 / CFBP 8728 / NCIMB 11950 / KT2440).